The sequence spans 393 residues: Cytochrome b (393 aa).

Topologically, residues 1–33 (MTIRNQRFSLLKQPISSTLNQHLVDYPTPSNLS) are mitochondrial matrix. The helical transmembrane segment at 34–57 (YWWGFGSLAGICLVIQIVTGVFLA) threads the bilayer. Residues 58-80 (MHYTPHVDLAFNSVEHIMRDVEG) lie on the Mitochondrial intermembrane side of the membrane. A helical transmembrane segment spans residues 81–108 (GWLLRYMHANGASMFFIVVYLHIFRGLY). 2 residues coordinate heme b: His88 and His102. The Mitochondrial matrix segment spans residues 109-116 (YASYSSPR). Residues 117–141 (EFVWCLGVVIFLLMIVTAFIGYVLP) traverse the membrane as a helical segment. Over 142-178 (WGQMSFWGATVITSLASAIPVVGDTIVTWLWGGFSVD) the chain is Mitochondrial intermembrane. Residues 179-210 (NATLNRFFSLHYLLPFILVGASLLHLAALHQY) traverse the membrane as a helical segment. Heme b-binding residues include His189 and His203. His208 provides a ligand contact to a ubiquinone. Residues 211–229 (GSNNPLGVHSEMDKIAFYP) lie on the Mitochondrial matrix side of the membrane. The chain crosses the membrane as a helical span at residues 230–252 (YFYVKDLVGWVAFAIFFSIWIFY). The Mitochondrial intermembrane segment spans residues 253 to 293 (APNVLGHPDNYIPANPMSTPPHIVPEWYFLPIYAILRSIPD). A helical membrane pass occupies residues 294-314 (KAGGVAAIALVFICLLALPFF). Residues 315 to 325 (KSMYVRSSSFR) are Mitochondrial matrix-facing. A helical transmembrane segment spans residues 326–346 (PIYQGMFWLLLADCLLLGWIG). The Mitochondrial intermembrane portion of the chain corresponds to 347–353 (CQPVEAP). A helical membrane pass occupies residues 354–370 (FVTIGQISSLVFFLFFA). The Mitochondrial matrix portion of the chain corresponds to 371–393 (ITPILGRVGRGIPNSYTDETDHT).

Belongs to the cytochrome b family. In terms of assembly, component of the ubiquinol-cytochrome c oxidoreductase (cytochrome b-c1 complex, complex III, CIII), a multisubunit enzyme composed of 10 subunits. The complex is composed of 3 respiratory subunits cytochrome b (MT-CYB), cytochrome c1 (CYC1-1 or CYC1-2) and Rieske protein (UCR1-1 or UCR1-2), 2 core protein subunits MPPalpha1 (or MPPalpha2) and MPPB, and 5 low-molecular weight protein subunits QCR7-1 (or QCR7-2), UCRQ-1 (or UCRQ-2), QCR9, UCRY and probably QCR6-1 (or QCR6-2). The complex exists as an obligatory dimer and forms supercomplexes (SCs) in the inner mitochondrial membrane with NADH-ubiquinone oxidoreductase (complex I, CI), resulting in different assemblies (supercomplexes SCI(1)III(2) and SCI(2)III(4)). Heme b serves as cofactor.

Its subcellular location is the mitochondrion inner membrane. In terms of biological role, component of the ubiquinol-cytochrome c oxidoreductase, a multisubunit transmembrane complex that is part of the mitochondrial electron transport chain which drives oxidative phosphorylation. The respiratory chain contains 3 multisubunit complexes succinate dehydrogenase (complex II, CII), ubiquinol-cytochrome c oxidoreductase (cytochrome b-c1 complex, complex III, CIII) and cytochrome c oxidase (complex IV, CIV), that cooperate to transfer electrons derived from NADH and succinate to molecular oxygen, creating an electrochemical gradient over the inner membrane that drives transmembrane transport and the ATP synthase. The cytochrome b-c1 complex catalyzes electron transfer from ubiquinol to cytochrome c, linking this redox reaction to translocation of protons across the mitochondrial inner membrane, with protons being carried across the membrane as hydrogens on the quinol. In the process called Q cycle, 2 protons are consumed from the matrix, 4 protons are released into the intermembrane space and 2 electrons are passed to cytochrome c. Cytochrome b is a catalytic core subunit containing 2 b-type hemes BL and BH topographically segregated in the quinone reduction (Qi) and quinol oxidation (Q0) sites on opposite sides of the membrane. This is Cytochrome b (MT-CYB) from Arabidopsis thaliana (Mouse-ear cress).